Consider the following 31-residue polypeptide: MASKEYSMLPLCSPSIVSHTSGGSIVLKGSS.

This is an uncharacterized protein from Saccharomyces cerevisiae (strain ATCC 204508 / S288c) (Baker's yeast).